An 80-amino-acid chain; its full sequence is Clavanin-A (80 aa).

An N-terminal signal peptide occupies residues 1 to 19; it reads MKTTILILLILGLGINAKS. Residues 20-29 constitute a propeptide that is removed on maturation; that stretch reads LEERKSEEEK. The residue at position 52 (Phe52) is a Phenylalanine amide. The propeptide occupies 54 to 80; the sequence is DDQQDNGKFYGHYAEDNGKHWYDTGDQ.

It localises to the secreted. Its function is as follows. Has antimicrobial activity. This chain is Clavanin-A, found in Styela clava (Sea squirt).